Reading from the N-terminus, the 267-residue chain is uncharacterized protein (267 aa).

A coiled-coil region spans residues 37–62 (DSSNNYKKKYKKYKRKYIDLKKQLNY).

This is an uncharacterized protein from Acanthamoeba polyphaga (Amoeba).